The following is a 191-amino-acid chain: Protein GrpE (191 aa).

The segment covering 1–19 has biased composition (basic and acidic residues); that stretch reads MKDEHNQKHDHLSQKEPES. The interval 1–44 is disordered; it reads MKDEHNQKHDHLSQKEPESYQKACACKEQQDEEMQEAGEKEGEI.

The protein belongs to the GrpE family. Homodimer.

Its subcellular location is the cytoplasm. Its function is as follows. Participates actively in the response to hyperosmotic and heat shock by preventing the aggregation of stress-denatured proteins, in association with DnaK and GrpE. It is the nucleotide exchange factor for DnaK and may function as a thermosensor. Unfolded proteins bind initially to DnaJ; upon interaction with the DnaJ-bound protein, DnaK hydrolyzes its bound ATP, resulting in the formation of a stable complex. GrpE releases ADP from DnaK; ATP binding to DnaK triggers the release of the substrate protein, thus completing the reaction cycle. Several rounds of ATP-dependent interactions between DnaJ, DnaK and GrpE are required for fully efficient folding. The sequence is that of Protein GrpE from Helicobacter pylori (strain G27).